Here is a 129-residue protein sequence, read N- to C-terminus: Iron-sulfur cluster assembly 1 homolog, mitochondrial (129 aa).

A mitochondrion-targeting transit peptide spans 1-12 (MSASLVRATVRA). Residues C57, C121, and C123 each contribute to the Fe cation site.

This sequence belongs to the HesB/IscA family. Interacts with CRY2, but not with CRY1 (in vitro).

It is found in the mitochondrion. Its function is as follows. Involved in the maturation of mitochondrial 4Fe-4S proteins functioning late in the iron-sulfur cluster assembly pathway. Probably involved in the binding of an intermediate of Fe/S cluster assembly. This chain is Iron-sulfur cluster assembly 1 homolog, mitochondrial (Isca1), found in Rattus norvegicus (Rat).